Here is a 284-residue protein sequence, read N- to C-terminus: tRNA pseudouridine synthase A (284 aa).

Asp52 serves as the catalytic Nucleophile. Position 149 (Tyr149) interacts with substrate.

The protein belongs to the tRNA pseudouridine synthase TruA family. As to quaternary structure, homodimer.

It carries out the reaction uridine(38/39/40) in tRNA = pseudouridine(38/39/40) in tRNA. In terms of biological role, formation of pseudouridine at positions 38, 39 and 40 in the anticodon stem and loop of transfer RNAs. This is tRNA pseudouridine synthase A from Orientia tsutsugamushi (strain Boryong) (Rickettsia tsutsugamushi).